A 396-amino-acid chain; its full sequence is Mannonate dehydratase (396 aa).

The protein belongs to the mannonate dehydratase family. Fe(2+) is required as a cofactor. Mn(2+) serves as cofactor.

It carries out the reaction D-mannonate = 2-dehydro-3-deoxy-D-gluconate + H2O. Its pathway is carbohydrate metabolism; pentose and glucuronate interconversion. Catalyzes the dehydration of D-mannonate. In Enterobacter sp. (strain 638), this protein is Mannonate dehydratase.